Reading from the N-terminus, the 389-residue chain is S-adenosylmethionine synthase (389 aa).

His-15 provides a ligand contact to ATP. Asp-17 contributes to the Mg(2+) binding site. K(+) is bound at residue Glu-43. L-methionine contacts are provided by Glu-56 and Gln-99. The interval 99 to 109 (QSPDIAQGVNE) is flexible loop. ATP is bound by residues 166–168 (DAK), 234–235 (RF), Asp-243, 249–250 (RK), Ala-266, and Lys-270. L-methionine is bound at residue Asp-243. Lys-274 provides a ligand contact to L-methionine.

Belongs to the AdoMet synthase family. Homotetramer; dimer of dimers. It depends on Mg(2+) as a cofactor. Requires K(+) as cofactor.

The protein resides in the cytoplasm. It catalyses the reaction L-methionine + ATP + H2O = S-adenosyl-L-methionine + phosphate + diphosphate. Its pathway is amino-acid biosynthesis; S-adenosyl-L-methionine biosynthesis; S-adenosyl-L-methionine from L-methionine: step 1/1. Its function is as follows. Catalyzes the formation of S-adenosylmethionine (AdoMet) from methionine and ATP. The overall synthetic reaction is composed of two sequential steps, AdoMet formation and the subsequent tripolyphosphate hydrolysis which occurs prior to release of AdoMet from the enzyme. The protein is S-adenosylmethionine synthase of Neisseria meningitidis serogroup C (strain 053442).